Reading from the N-terminus, the 211-residue chain is Ubiquitin-conjugating enzyme E2 S (211 aa).

One can recognise a UBC core domain in the interval 11 to 157 (HIIRQVYKEV…ARLMTEIHAQ (147 aa)). Cysteine 95 (glycyl thioester intermediate) is an active-site residue. Residues 157–211 (QGSSLRGKDPTDPCSSASATLVSGDGPMAKKHAGDRDKKLAAKKKTDKKRALRRL) are disordered. Over residues 197 to 211 (AAKKKTDKKRALRRL) the composition is skewed to basic residues.

The protein belongs to the ubiquitin-conjugating enzyme family.

It carries out the reaction S-ubiquitinyl-[E1 ubiquitin-activating enzyme]-L-cysteine + [E2 ubiquitin-conjugating enzyme]-L-cysteine = [E1 ubiquitin-activating enzyme]-L-cysteine + S-ubiquitinyl-[E2 ubiquitin-conjugating enzyme]-L-cysteine.. It participates in protein modification; protein ubiquitination. Catalyzes the covalent attachment of ubiquitin to other proteins. Acts as an essential factor of the anaphase promoting complex/cyclosome (APC/C), a cell cycle-regulated ubiquitin ligase that controls progression through mitosis. Acts by specifically elongating 'Lys-11'-linked polyubiquitin chains initiated by the E2 enzyme ube2c/ubch10 on APC/C substrates, enhancing the degradation of APC/C substrates by the proteasome and promoting mitotic exit. This chain is Ubiquitin-conjugating enzyme E2 S (ube2s), found in Xenopus tropicalis (Western clawed frog).